The sequence spans 1680 residues: GRIP and coiled-coil domain-containing protein 2 (1680 aa).

At methionine 1 the chain carries N-acetylmethionine. The segment covering 1–14 has biased composition (low complexity); that stretch reads MEDSAPDAVAAAPS. Disordered regions lie at residues 1 to 23 and 1468 to 1522; these read MEDS…KLET and KSEP…SSAG. A coiled-coil region spans residues 31 to 1614; that stretch reads KFAKKQMMLL…REKSVANLEY (1584 aa). Positions 1469–1484 are enriched in polar residues; the sequence is SEPSTRSPASSHQPSK. 2 positions are modified to phosphoserine: serine 1475 and serine 1479. The tract at residues 1570–1609 is mediates interaction with RAB6A; sequence HLNGLLRETEATNAILMEQIKLLKSEIRRLERNQEREKSV. Residues 1570–1680 are mediates interaction with RAB9A; sequence HLNGLLRETE…SYLHSWSGLR (111 aa). The 51-residue stretch at 1605-1655 folds into the GRIP domain; sequence REKSVANLEYLKNVLLRFIFLKPGSERERLLPVIDTMLQLSPEEKGKLATV.

Homodimer. Interacts (via GRIP domain) with RAB6A (preferentially in its GTP-bound form). May interact (RAB6A-dependent) with ARL1; might be involved in GCC2 Golgi localization. Interacts (probably via GRIP domain) with RAB9A (preferentially in its GTP-bound form). Interacts with CLASP1 and CLASP2; recruits both proteins to membranes of the TGN. Interacts with STX16.

Its subcellular location is the cytoplasm. It localises to the golgi apparatus. It is found in the trans-Golgi network membrane. Its function is as follows. Golgin which probably tethers transport vesicles to the trans-Golgi network (TGN) and regulates vesicular transport between the endosomes and the Golgi. As a RAB9A effector it is involved in recycling of the mannose 6-phosphate receptor from the late endosomes to the TGN. May also play a role in transport between the recycling endosomes and the Golgi. Required for maintenance of the Golgi structure, it is involved in the biogenesis of noncentrosomal, Golgi-associated microtubules through recruitment of CLASP1 and CLASP2. In Mus musculus (Mouse), this protein is GRIP and coiled-coil domain-containing protein 2 (Gcc2).